The chain runs to 270 residues: Aquaporin-11 (270 aa).

2 helical membrane-spanning segments follow: residues 5–25 (IMTMYPLLISILHILFIISIC) and 59–79 (FELGVITQIYGFSAYALGLFF). Residues 94 to 96 (DPS) carry the NPA 1 motif. Residues 120-140 (IMGAAVSYRFAKIFWSFGLMA) traverse the membrane as a helical segment. Asn-148 carries N-linked (GlcNAc...) asparagine glycosylation. 2 consecutive transmembrane segments (helical) span residues 153-173 (ASLQVPVLIGLGFETFETIVN) and 184-204 (MLISAISDVCITFFGLFVSGG). Positions 207–209 (NPT) match the NPA 2 motif. The chain crosses the membrane as a helical span at residues 220–240 (GLSGPSFFLVYWFGPILGSSI).

The protein belongs to the MIP/aquaporin (TC 1.A.8) family.

Its subcellular location is the membrane. The catalysed reaction is H2O(in) = H2O(out). Functionally, probable intracellular unorthodox aquaporin that may modulate the water content and osmolytes during anhydrobiosis. The chain is Aquaporin-11 from Milnesium tardigradum (Water bear).